The primary structure comprises 364 residues: Metalloendoproteinase 1-MMP (364 aa).

A signal peptide spans 1–28 (MSRNLIYRRNRALCFVLILFCFPYRFGA). Positions 29 to 149 (RNTPEAEQST…NNDFLHTTAH (121 aa)) are cleaved as a propeptide — activation peptide. Asn-49 carries N-linked (GlcNAc...) asparagine glycosylation. A Cysteine switch motif is present at residues 128–135 (PRCGVSDT). Position 130 (Cys-130) interacts with Zn(2+). Asp-211 is a binding site for Ca(2+). Positions 221 and 223 each coordinate Zn(2+). The Ca(2+) site is built by Asp-228 and Gly-229. Residue His-236 coordinates Zn(2+). Gly-243 contacts Ca(2+). Position 246 (His-246) interacts with Zn(2+). Asp-248 and Glu-251 together coordinate Ca(2+). Residue His-275 participates in Zn(2+) binding. Glu-276 is a catalytic residue. 2 residues coordinate Zn(2+): His-279 and His-285. The N-linked (GlcNAc...) asparagine glycan is linked to Asn-338. Gly-339 is lipidated: GPI-anchor amidated glycine. The propeptide at 340 to 364 (TVSHRFLSGNFIGYVLLVVGLILFL) is removed in mature form.

The protein belongs to the peptidase M10A family. Matrix metalloproteinases (MMPs) subfamily. Ca(2+) is required as a cofactor. Requires Zn(2+) as cofactor. As to expression, mostly expressed in flowers, roots and stems, and, to a lower extent, in leaves.

It is found in the cell membrane. Inhibited by human TIMP-1 and TIMP-2 and by the peptide hydroxamate inhibitor (BB-94). Repressed by acetohydroxamic acid (AHA). Functionally, matrix metalloproteinases (MMPs) or matrixins may play a role in the degradation and remodeling of the extracellular matrix (ECM) during development or in response to stresses. Can cleave myelin basic protein as well as fluorigenic peptide substrates, McaPLANvaDpaAR-NH(2) and McaPChaGNvaHADpa-NH(2) 4-fold more efficiently than McaPLGLDpaAR-NH(2) (QF24). Active on myelin basic protein (MBP) and, to some extent, on McaPLGLDpaAR-NH(2) (QF24) and beta-casein. This chain is Metalloendoproteinase 1-MMP, found in Arabidopsis thaliana (Mouse-ear cress).